The sequence spans 287 residues: Large ribosomal subunit protein uL2 (287 aa).

The tract at residues 216–287 (RRPEVRGSVM…SKRGRGGRDA (72 aa)) is disordered. Residues 271 to 287 (QRRRRKSSKRGRGGRDA) show a composition bias toward basic residues.

Belongs to the universal ribosomal protein uL2 family. Part of the 50S ribosomal subunit. Forms a bridge to the 30S subunit in the 70S ribosome.

Functionally, one of the primary rRNA binding proteins. Required for association of the 30S and 50S subunits to form the 70S ribosome, for tRNA binding and peptide bond formation. It has been suggested to have peptidyltransferase activity; this is somewhat controversial. Makes several contacts with the 16S rRNA in the 70S ribosome. This Synechococcus sp. (strain ATCC 27144 / PCC 6301 / SAUG 1402/1) (Anacystis nidulans) protein is Large ribosomal subunit protein uL2.